Consider the following 215-residue polypeptide: Ras-related protein Rab-5B (215 aa).

The GTP site is built by S29, A30, G32, K33, S34, S35, H46, E47, T52, G78, N133, K134, D136, A164, and K165. S34 is a Mg(2+) binding site. Short sequence motifs (switch) lie at residues 44–56 (QFHE…IGAA) and 77–93 (AGQE…YRGA). Residue T52 coordinates Mg(2+). The interval 184 to 215 (SEPQSTSGAAGRSRGVDLHEQTQQNKSQCCSN) is disordered. A compositionally biased stretch (polar residues) spans 204-215 (QTQQNKSQCCSN). Residues C212 and C213 are each lipidated (S-geranylgeranyl cysteine).

This sequence belongs to the small GTPase superfamily. Rab family. Requires Mg(2+) as cofactor.

It localises to the cell membrane. The protein localises to the early endosome membrane. The catalysed reaction is GTP + H2O = GDP + phosphate + H(+). With respect to regulation, regulated by guanine nucleotide exchange factors (GEFs) which promote the exchange of bound GDP for free GTP. Regulated by GTPase activating proteins (GAPs) which increase the GTP hydrolysis activity. Inhibited by GDP dissociation inhibitors (GDIs). Functionally, the small GTPases Rab are key regulators of intracellular membrane trafficking, from the formation of transport vesicles to their fusion with membranes. Rabs cycle between an inactive GDP-bound form and an active GTP-bound form that is able to recruit to membranes different sets of downstream effectors directly responsible for vesicle formation, movement, tethering and fusion. The polypeptide is Ras-related protein Rab-5B (RAB5B) (Gallus gallus (Chicken)).